The primary structure comprises 789 residues: Ribonucleoside-diphosphate reductase large subunit (789 aa).

Residues Thr207, 222 to 223 (SC), Gly253, 435 to 439 (NLCTE), and 620 to 624 (PTVSS) each bind substrate. A disulfide bridge links Cys223 with Cys452. Residue Asn435 is the Proton acceptor of the active site. The active-site Cysteine radical intermediate is the Cys437. Glu439 acts as the Proton acceptor in catalysis.

Belongs to the ribonucleoside diphosphate reductase large chain family. As to quaternary structure, heterotetramer composed of a homodimer of the large subunit (R1) and a homodimer of the small subunit (R2). Larger multisubunit protein complex are also active, composed of (R1)n(R2)n.

It catalyses the reaction a 2'-deoxyribonucleoside 5'-diphosphate + [thioredoxin]-disulfide + H2O = a ribonucleoside 5'-diphosphate + [thioredoxin]-dithiol. In terms of biological role, ribonucleoside-diphosphate reductase holoenzyme provides the precursors necessary for viral DNA synthesis. Allows virus growth in non-dividing cells, as well as reactivation from latency in infected hosts. Catalyzes the biosynthesis of deoxyribonucleotides from the corresponding ribonucleotides. The polypeptide is Ribonucleoside-diphosphate reductase large subunit (Equus caballus (Horse)).